The following is a 339-amino-acid chain: Biotin synthase (339 aa).

The 228-residue stretch at 55–282 (NAVQLSTLLS…KAVVRLSAGR (228 aa)) folds into the Radical SAM core domain. The [4Fe-4S] cluster site is built by Cys-70, Cys-74, and Cys-77. Cys-114, Cys-145, Cys-205, and Arg-277 together coordinate [2Fe-2S] cluster.

This sequence belongs to the radical SAM superfamily. Biotin synthase family. As to quaternary structure, homodimer. [4Fe-4S] cluster serves as cofactor. Requires [2Fe-2S] cluster as cofactor.

It catalyses the reaction (4R,5S)-dethiobiotin + (sulfur carrier)-SH + 2 reduced [2Fe-2S]-[ferredoxin] + 2 S-adenosyl-L-methionine = (sulfur carrier)-H + biotin + 2 5'-deoxyadenosine + 2 L-methionine + 2 oxidized [2Fe-2S]-[ferredoxin]. It functions in the pathway cofactor biosynthesis; biotin biosynthesis; biotin from 7,8-diaminononanoate: step 2/2. Its function is as follows. Catalyzes the conversion of dethiobiotin (DTB) to biotin by the insertion of a sulfur atom into dethiobiotin via a radical-based mechanism. The polypeptide is Biotin synthase (Burkholderia cenocepacia (strain ATCC BAA-245 / DSM 16553 / LMG 16656 / NCTC 13227 / J2315 / CF5610) (Burkholderia cepacia (strain J2315))).